The following is a 320-amino-acid chain: Probable L-ascorbate peroxidase 5, chloroplastic (320 aa).

Residues Met1 to Ser42 constitute a chloroplast transit peptide. The Proton acceptor role is filled by His80. Heme b is bound at residue His209. Residue Thr210 participates in K(+) binding. Residues Arg213–Trp241 are disordered. Residues Ala214 to Tyr228 are compositionally biased toward basic and acidic residues. Residues Thr242 and Asp249 each coordinate K(+).

This sequence belongs to the peroxidase family. Ascorbate peroxidase subfamily. Requires heme b as cofactor. In terms of tissue distribution, expressed in leaves, stems and flowers.

The protein resides in the plastid. It is found in the chloroplast stroma. It carries out the reaction L-ascorbate + H2O2 = L-dehydroascorbate + 2 H2O. Its function is as follows. Plays a key role in hydrogen peroxide removal. This Oryza sativa subsp. japonica (Rice) protein is Probable L-ascorbate peroxidase 5, chloroplastic.